A 270-amino-acid polypeptide reads, in one-letter code: Type II restriction enzyme CeqI (270 aa).

It catalyses the reaction Endonucleolytic cleavage of DNA to give specific double-stranded fragments with terminal 5'-phosphates.. A P subtype restriction enzyme that recognizes the double-stranded sequence 5'-GATATC-3' and cleaves after T-3. The polypeptide is Type II restriction enzyme CeqI (ceqIR) (Rhodococcus hoagii (Corynebacterium equii)).